Reading from the N-terminus, the 224-residue chain is tRNA (guanine-N(7)-)-methyltransferase (224 aa).

Glutamate 56, glutamate 81, aspartate 108, and aspartate 131 together coordinate S-adenosyl-L-methionine. Aspartate 131 is a catalytic residue. Residues lysine 135, aspartate 167, and 202–205 contribute to the substrate site; that span reads TKFE.

It belongs to the class I-like SAM-binding methyltransferase superfamily. TrmB family.

It catalyses the reaction guanosine(46) in tRNA + S-adenosyl-L-methionine = N(7)-methylguanosine(46) in tRNA + S-adenosyl-L-homocysteine. It participates in tRNA modification; N(7)-methylguanine-tRNA biosynthesis. Catalyzes the formation of N(7)-methylguanine at position 46 (m7G46) in tRNA. This Nitrosomonas eutropha (strain DSM 101675 / C91 / Nm57) protein is tRNA (guanine-N(7)-)-methyltransferase.